We begin with the raw amino-acid sequence, 103 residues long: UPF0145 protein PERMA_0324 (103 aa).

Belongs to the UPF0145 family.

The chain is UPF0145 protein PERMA_0324 from Persephonella marina (strain DSM 14350 / EX-H1).